The following is a 753-amino-acid chain: Lysyl oxidase homolog 3 (753 aa).

Positions 1-25 are cleaved as a signal peptide; that stretch reads MRPVSVWQWSPWGLLLCLLCSSCLG. SRCR domains follow at residues 44–145 and 169–282; these read FRLA…VICK and VRIR…VSCV. 6 disulfide bridges follow: C70-C134, C83-C144, C114-C124, C201-C271, C214-C281, and C248-C258. N111 is a glycosylation site (N-linked (GlcNAc...) asparagine). The N-linked (GlcNAc...) asparagine glycan is linked to N266. Over residues 290 to 302 the composition is skewed to low complexity; it reads SSGQKKQQQSKPQ. The interval 290–315 is disordered; sequence SSGQKKQQQSKPQGEARVRLKGGAHP. 2 consecutive SRCR domains span residues 307–407 and 417–525; these read VRLK…VRCN and IRLS…VICS. Disulfide bonds link C332–C396, C345–C406, C376–C386, C446–C511, C459–C524, C492–C502, C554–C560, C606–C654, C638–C644, C666–C676, and C713–C727. N-linked (GlcNAc...) asparagine glycans are attached at residues N390 and N481. Residues 529–732 are lysyl-oxidase like; that stretch reads SDLLLHSALV…WVHNCHIGDA (204 aa). Residues H607, H609, and H611 each coordinate Cu cation. N625 is a glycosylation site (N-linked (GlcNAc...) asparagine). A cross-link (lysine tyrosylquinone (Lys-Tyr)) is located at residues 634-670; sequence KASFCLEDTECQEDVSKRYECANFGEQGITVGCWDLY. Position 670 is a 2',4',5'-topaquinone (Y670).

Belongs to the lysyl oxidase family. Interacts with STAT3. The cofactor is Cu cation. Lysine tyrosylquinone residue serves as cofactor. Post-translationally, the lysine tyrosylquinone cross-link (LTQ) is generated by condensation of the epsilon-amino group of a lysine with a topaquinone produced by oxidation of tyrosine. In terms of tissue distribution, isoform 1: Predominantly detected in the heart, placenta, lung, and small intestine. Isoform 2: Highly detected in the kidney, pancreas, spleen, and thymus, and is absent in lung. In eye, present in all layers of corneas as well as in the limbus and conjunctiva (at protein level).

The protein localises to the secreted. It is found in the extracellular space. It localises to the cytoplasm. Its subcellular location is the nucleus. It carries out the reaction L-lysyl-[protein] + O2 + H2O = (S)-2-amino-6-oxohexanoyl-[protein] + H2O2 + NH4(+). The enzyme catalyses N(6)-acetyl-L-lysyl-[protein] + O2 + H2O = acetamide + (S)-2-amino-6-oxohexanoyl-[protein] + H2O2. Functionally, protein-lysine 6-oxidase that mediates the oxidation of peptidyl lysine residues to allysine in target proteins. Catalyzes the post-translational oxidative deamination of peptidyl lysine residues in precursors of elastin and different types of collagens, a prerequisite in the formation of cross-links between collagens and elastin. Required for somite boundary formation by catalyzing oxidation of fibronectin (FN1), enhancing integrin signaling in myofibers and their adhesion to the myotendinous junction (MTJ). Acts as a regulator of inflammatory response by inhibiting differentiation of naive CD4(+) T-cells into T-helper Th17 or regulatory T-cells (Treg): acts by interacting with STAT3 in the nucleus and catalyzing both deacetylation and oxidation of lysine residues on STAT3, leading to disrupt STAT3 dimerization and inhibit STAT3 transcription activity. Oxidation of lysine residues to allysine on STAT3 preferentially takes place on lysine residues that are acetylated. Also able to catalyze deacetylation of lysine residues on STAT3. Shows protein-lysine 6-oxidase activity toward elastin and different types of collagens, with the highest activity toward collagen type VIII. Its function is as follows. Shows protein-lysine 6-oxidase activity toward elastin and different types of collagens, with the highest activity toward collagen type IV. This Homo sapiens (Human) protein is Lysyl oxidase homolog 3.